We begin with the raw amino-acid sequence, 377 residues long: tRNA(Met) cytidine acetate ligase (377 aa).

ATP-binding positions include 7–20 (ITEY…HLFH), G100, N153, and R178.

It belongs to the TmcAL family.

The protein resides in the cytoplasm. It carries out the reaction cytidine(34) in elongator tRNA(Met) + acetate + ATP = N(4)-acetylcytidine(34) in elongator tRNA(Met) + AMP + diphosphate. Catalyzes the formation of N(4)-acetylcytidine (ac(4)C) at the wobble position of elongator tRNA(Met), using acetate and ATP as substrates. First activates an acetate ion to form acetyladenylate (Ac-AMP) and then transfers the acetyl group to tRNA to form ac(4)C34. The sequence is that of tRNA(Met) cytidine acetate ligase from Staphylococcus epidermidis (strain ATCC 12228 / FDA PCI 1200).